Consider the following 427-residue polypeptide: Transcription termination factor Rho (427 aa).

One can recognise a Rho RNA-BD domain in the interval 55-130 (YFFGEGVLEI…IKIEAINYRP (76 aa)). ATP-binding positions include 173–178 (GKGQRG), 185–190 (KAGKTT), and R216.

Belongs to the Rho family. As to quaternary structure, homohexamer. The homohexamer assembles into an open ring structure.

Functionally, facilitates transcription termination by a mechanism that involves Rho binding to the nascent RNA, activation of Rho's RNA-dependent ATPase activity, and release of the mRNA from the DNA template. This Thermotoga maritima (strain ATCC 43589 / DSM 3109 / JCM 10099 / NBRC 100826 / MSB8) protein is Transcription termination factor Rho.